The primary structure comprises 299 residues: Tyrosine recombinase XerC (299 aa).

Positions 3 to 87 (PQCQSYLQQF…AIKQWGEFLL (85 aa)) constitute a Core-binding (CB) domain. The Tyr recombinase domain occupies 108 to 287 (PLPKNIDVDS…DFQHLAKVYD (180 aa)). Active-site residues include Arg147, Lys171, His239, Arg242, and His265. The active-site O-(3'-phospho-DNA)-tyrosine intermediate is the Tyr274.

It belongs to the 'phage' integrase family. XerC subfamily. In terms of assembly, forms a cyclic heterotetrameric complex composed of two molecules of XerC and two molecules of XerD.

The protein localises to the cytoplasm. Site-specific tyrosine recombinase, which acts by catalyzing the cutting and rejoining of the recombining DNA molecules. The XerC-XerD complex is essential to convert dimers of the bacterial chromosome into monomers to permit their segregation at cell division. It also contributes to the segregational stability of plasmids. This Shewanella sp. (strain ANA-3) protein is Tyrosine recombinase XerC.